Consider the following 295-residue polypeptide: Ethanolamine ammonia-lyase small subunit (295 aa).

Residues Val207, Glu228, and Cys258 each contribute to the adenosylcob(III)alamin site.

The protein belongs to the EutC family. In terms of assembly, the basic unit is a heterodimer which dimerizes to form tetramers. The heterotetramers trimerize; 6 large subunits form a core ring with 6 small subunits projecting outwards. Adenosylcob(III)alamin is required as a cofactor.

It is found in the bacterial microcompartment. It carries out the reaction ethanolamine = acetaldehyde + NH4(+). It functions in the pathway amine and polyamine degradation; ethanolamine degradation. Catalyzes the deamination of various vicinal amino-alcohols to oxo compounds. Allows this organism to utilize ethanolamine as the sole source of nitrogen and carbon in the presence of external vitamin B12. The chain is Ethanolamine ammonia-lyase small subunit from Escherichia coli (strain SMS-3-5 / SECEC).